Consider the following 231-residue polypeptide: Cysteine-rich venom protein VAR10 (231 aa).

The first 19 residues, 1–19, serve as a signal peptide directing secretion; it reads MILLKLYLTLAAILCQSRG. The region spanning 41 to 169 is the SCP domain; that stretch reads NKHNDLRRTV…SLKYFQVCQY (129 aa). Disulfide bonds link C77–C156, C95–C170, C151–C167, C189–C196, and C214–C231. The 27-residue stretch at 205–231 folds into the ShKT domain; that stretch reads CAYNDDYTSCPDLTKQVGCHHPVTANC.

The protein belongs to the CRISP family. In terms of processing, contains 8 disulfide bonds. Expressed by the venom gland.

The protein resides in the secreted. Functionally, blocks ryanodine receptors, and potassium channels. The protein is Cysteine-rich venom protein VAR10 of Varanus varius (Lace monitor lizard).